We begin with the raw amino-acid sequence, 550 residues long: CTP synthase (550 aa).

The segment at M1 to L266 is amidoligase domain. S14 contributes to the CTP binding site. A UTP-binding site is contributed by S14. Residues S15–I20 and D72 contribute to the ATP site. 2 residues coordinate Mg(2+): D72 and E140. CTP-binding positions include D147–E149, K187–Q192, and K223. Residues K187–Q192 and K223 contribute to the UTP site. The region spanning T291–K546 is the Glutamine amidotransferase type-1 domain. Residue G353 coordinates L-glutamine. The active-site Nucleophile; for glutamine hydrolysis is C380. Residues L381–Q384, E404, and R474 each bind L-glutamine. Residues H519 and E521 contribute to the active site.

The protein belongs to the CTP synthase family. Homotetramer.

The enzyme catalyses UTP + L-glutamine + ATP + H2O = CTP + L-glutamate + ADP + phosphate + 2 H(+). It catalyses the reaction L-glutamine + H2O = L-glutamate + NH4(+). It carries out the reaction UTP + NH4(+) + ATP = CTP + ADP + phosphate + 2 H(+). The protein operates within pyrimidine metabolism; CTP biosynthesis via de novo pathway; CTP from UDP: step 2/2. Its activity is regulated as follows. Allosterically activated by GTP, when glutamine is the substrate; GTP has no effect on the reaction when ammonia is the substrate. The allosteric effector GTP functions by stabilizing the protein conformation that binds the tetrahedral intermediate(s) formed during glutamine hydrolysis. Inhibited by the product CTP, via allosteric rather than competitive inhibition. Catalyzes the ATP-dependent amination of UTP to CTP with either L-glutamine or ammonia as the source of nitrogen. Regulates intracellular CTP levels through interactions with the four ribonucleotide triphosphates. The polypeptide is CTP synthase (Blochmanniella floridana).